A 384-amino-acid chain; its full sequence is 8-amino-7-oxononanoate synthase (384 aa).

Arg23 contacts substrate. Position 110-111 (110-111) interacts with pyridoxal 5'-phosphate; sequence GF. Substrate is bound at residue His135. Pyridoxal 5'-phosphate contacts are provided by Ser179, His206, and Thr232. Lys235 carries the post-translational modification N6-(pyridoxal phosphate)lysine. Position 348 (Thr348) interacts with substrate.

The protein belongs to the class-II pyridoxal-phosphate-dependent aminotransferase family. BioF subfamily. As to quaternary structure, homodimer. Pyridoxal 5'-phosphate is required as a cofactor.

It carries out the reaction 6-carboxyhexanoyl-[ACP] + L-alanine + H(+) = (8S)-8-amino-7-oxononanoate + holo-[ACP] + CO2. It participates in cofactor biosynthesis; biotin biosynthesis. Functionally, catalyzes the decarboxylative condensation of pimeloyl-[acyl-carrier protein] and L-alanine to produce 8-amino-7-oxononanoate (AON), [acyl-carrier protein], and carbon dioxide. This Vibrio cholerae serotype O1 (strain ATCC 39315 / El Tor Inaba N16961) protein is 8-amino-7-oxononanoate synthase.